The following is a 464-amino-acid chain: Alpha-1,6-mannosyl-glycoprotein 4-beta-N-acetylglucosaminyltransferase (464 aa).

Residues 1-10 (MRCSPKRSLT) are Cytoplasmic-facing. Residues 11-31 (AVIAASFLLLLLLLLLHRGSW) traverse the membrane as a helical; Signal-anchor for type II membrane protein segment. Residues 32–464 (QDPQEVQFRD…QSIGIWTAGT (433 aa)) lie on the Lumenal side of the membrane. N-linked (GlcNAc...) asparagine glycans are attached at residues Asn70 and Asn201.

Belongs to the glycosyltransferase 54 family. Requires a divalent metal cation as cofactor. As to expression, highly expressed in oviduct, spleen, lung and colon.

It is found in the golgi apparatus membrane. The catalysed reaction is N(4)-{beta-D-GlcNAc-(1-&gt;2)-[beta-D-GlcNAc-(1-&gt;4)]-alpha-D-Man-(1-&gt;3)-[beta-D-GlcNAc-(1-&gt;2)-[beta-D-GlcNAc-(1-&gt;6)]-alpha-D-Man-(1-&gt;6)]-beta-D-Man-(1-&gt;4)-beta-D-GlcNAc-(1-&gt;4)-beta-D-GlcNAc}-L-asparaginyl-[protein] + UDP-N-acetyl-alpha-D-glucosamine = N(4)-{beta-D-GlcNAc-(1-&gt;2)-[beta-D-GlcNAc-(1-&gt;4)]-alpha-D-Man-(1-&gt;3)-[beta-D-GlcNAc-(1-&gt;2)-[beta-D-GlcNAc-(1-&gt;4)]-[beta-D-GlcNAc-(1-&gt;6)]-alpha-D-Man-(1-&gt;6)]-beta-D-Man-(1-&gt;4)-beta-D-GlcNAc-(1-&gt;4)-beta-D-GlcNAc}-L-asparaginyl-[protein] + UDP + H(+). It participates in protein modification; protein glycosylation. Glycosyltransferase that catalyzes the transfer of GlcNAc to the Manalpha1-6 arm to form GlcNAcBeta1-4Manalpha1-6 linkage (also named 'GnT-VI' activity). May also participate in the transfer of N-acetylglucosamine (GlcNAc) to the core mannose residues of N-linked glycans by catalyzing the formation of the GlcNAcbeta1-4 branch on the GlcNAcbeta1-2Manalpha1-3 arm of the core structure of N-linked glycans. In Gallus gallus (Chicken), this protein is Alpha-1,6-mannosyl-glycoprotein 4-beta-N-acetylglucosaminyltransferase (MGAT4C).